The chain runs to 156 residues: MGRSISVSFGLLVVFLSLSGTGADQDCLPGWSSHEGHCYKVFNLDKTWEDAEKFCTEQANSGHLVSIDSKKEANFVAELVSQNIKETRRTDFVWIGLRAEDKRQHCSSEWSDGSSINYQNWIEAESKKCLGLEKQTRYRKWVNLNCGKPYRFTCEI.

The N-terminal stretch at 1 to 23 (MGRSISVSFGLLVVFLSLSGTGA) is a signal peptide. Disulfide bonds link Cys-27-Cys-38, Cys-55-Cys-154, and Cys-129-Cys-146. The C-type lectin domain maps to 34-155 (HEGHCYKVFN…CGKPYRFTCE (122 aa)).

This sequence belongs to the snaclec family. In terms of assembly, heterodimer; disulfide-linked. Expressed by the venom gland.

The protein localises to the secreted. In terms of biological role, interferes with one step of hemostasis (modulation of platelet aggregation, or coagulation cascade, for example). In Macrovipera lebetinus (Levantine viper), this protein is Snaclec A5.